The following is a 271-amino-acid chain: Formamidopyrimidine-DNA glycosylase (271 aa).

Proline 2 functions as the Schiff-base intermediate with DNA in the catalytic mechanism. The Proton donor role is filled by glutamate 3. The active-site Proton donor; for beta-elimination activity is lysine 56. Residues histidine 89, arginine 107, and arginine 151 each coordinate DNA. The segment at 236 to 270 (MVYDRAGLPCRVCAAPIKSIRQGQRSSFYCATCQK) adopts an FPG-type zinc-finger fold. Catalysis depends on arginine 260, which acts as the Proton donor; for delta-elimination activity.

This sequence belongs to the FPG family. As to quaternary structure, monomer. It depends on Zn(2+) as a cofactor.

It catalyses the reaction Hydrolysis of DNA containing ring-opened 7-methylguanine residues, releasing 2,6-diamino-4-hydroxy-5-(N-methyl)formamidopyrimidine.. The catalysed reaction is 2'-deoxyribonucleotide-(2'-deoxyribose 5'-phosphate)-2'-deoxyribonucleotide-DNA = a 3'-end 2'-deoxyribonucleotide-(2,3-dehydro-2,3-deoxyribose 5'-phosphate)-DNA + a 5'-end 5'-phospho-2'-deoxyribonucleoside-DNA + H(+). Its function is as follows. Involved in base excision repair of DNA damaged by oxidation or by mutagenic agents. Acts as a DNA glycosylase that recognizes and removes damaged bases. Has a preference for oxidized purines, such as 7,8-dihydro-8-oxoguanine (8-oxoG). Has AP (apurinic/apyrimidinic) lyase activity and introduces nicks in the DNA strand. Cleaves the DNA backbone by beta-delta elimination to generate a single-strand break at the site of the removed base with both 3'- and 5'-phosphates. This Polaromonas naphthalenivorans (strain CJ2) protein is Formamidopyrimidine-DNA glycosylase.